Consider the following 628-residue polypeptide: Glutamyl-tRNA(Gln) amidotransferase subunit E (628 aa).

The protein belongs to the GatB/GatE family. GatE subfamily. Heterodimer of GatD and GatE.

The enzyme catalyses L-glutamyl-tRNA(Gln) + L-glutamine + ATP + H2O = L-glutaminyl-tRNA(Gln) + L-glutamate + ADP + phosphate + H(+). In terms of biological role, allows the formation of correctly charged Gln-tRNA(Gln) through the transamidation of misacylated Glu-tRNA(Gln) in organisms which lack glutaminyl-tRNA synthetase. The reaction takes place in the presence of glutamine and ATP through an activated gamma-phospho-Glu-tRNA(Gln). The GatDE system is specific for glutamate and does not act on aspartate. The polypeptide is Glutamyl-tRNA(Gln) amidotransferase subunit E (Sulfurisphaera tokodaii (strain DSM 16993 / JCM 10545 / NBRC 100140 / 7) (Sulfolobus tokodaii)).